A 404-amino-acid chain; its full sequence is Cysteine--tRNA ligase (404 aa).

C14 contacts Zn(2+). Positions 16–26 match the 'HIGH' region motif; sequence PTVYSDVHIGN. C190, H216, and E220 together coordinate Zn(2+). Positions 248–252 match the 'KMSKS' region motif; sequence KMAKS. K251 lines the ATP pocket.

The protein belongs to the class-I aminoacyl-tRNA synthetase family. As to quaternary structure, monomer. Zn(2+) serves as cofactor.

Its subcellular location is the cytoplasm. The catalysed reaction is tRNA(Cys) + L-cysteine + ATP = L-cysteinyl-tRNA(Cys) + AMP + diphosphate. This chain is Cysteine--tRNA ligase, found in Mesomycoplasma hyopneumoniae (strain 232) (Mycoplasma hyopneumoniae).